Reading from the N-terminus, the 192-residue chain is Protein SHORT HYPOCOTYL IN WHITE LIGHT 1 (192 aa).

Positions 43 to 50 match the Nuclear localization signal motif; the sequence is FRRLNRSL. Residues 70–92 are disordered; sequence GGDNYDVVPDDDGFSDDDDEEDE. Residues 77–92 are compositionally biased toward acidic residues; the sequence is VPDDDGFSDDDDEEDE. 2 helical membrane passes run 122-142 and 159-179; these read ILPA…ILLL and GGTV…ASFF.

In terms of assembly, interacts with HY5 and COP1 in the nucleus. Expressed in young seedlings (e.g. hypocotyl and cotyledons) and in green tissues (e.g. leaves, stems, sepals, and young siliques).

It is found in the nucleus membrane. Its function is as follows. Negative regulator of photomorphogenesis modulating both light and abscisic acid (ABA) signaling pathways. Negatively regulates the light-mediated inhibition of hypocotyl elongation, probably in a PHYB-mediated signaling pathway, but promotes flowering time (especially in long days) and lateral root formation. Enhances light-regulated gene expression. Promotes COP1-mediated degradation of HY5 during seedling development (e.g. hypocotyl growth) through enhanced ubiquitination in the darkness. Also involved in root gravitropism. This Arabidopsis thaliana (Mouse-ear cress) protein is Protein SHORT HYPOCOTYL IN WHITE LIGHT 1.